We begin with the raw amino-acid sequence, 413 residues long: Serine hydroxymethyltransferase (413 aa).

(6S)-5,6,7,8-tetrahydrofolate contacts are provided by residues Leu119 and 123 to 125 (GHL). N6-(pyridoxal phosphate)lysine is present on Lys228. Glu243 provides a ligand contact to (6S)-5,6,7,8-tetrahydrofolate.

The protein belongs to the SHMT family. In terms of assembly, homodimer. It depends on pyridoxal 5'-phosphate as a cofactor.

Its subcellular location is the cytoplasm. The catalysed reaction is (6R)-5,10-methylene-5,6,7,8-tetrahydrofolate + glycine + H2O = (6S)-5,6,7,8-tetrahydrofolate + L-serine. The protein operates within one-carbon metabolism; tetrahydrofolate interconversion. It functions in the pathway amino-acid biosynthesis; glycine biosynthesis; glycine from L-serine: step 1/1. Functionally, catalyzes the reversible interconversion of serine and glycine with tetrahydrofolate (THF) serving as the one-carbon carrier. This reaction serves as the major source of one-carbon groups required for the biosynthesis of purines, thymidylate, methionine, and other important biomolecules. Also exhibits THF-independent aldolase activity toward beta-hydroxyamino acids, producing glycine and aldehydes, via a retro-aldol mechanism. The protein is Serine hydroxymethyltransferase of Desulforamulus reducens (strain ATCC BAA-1160 / DSM 100696 / MI-1) (Desulfotomaculum reducens).